A 274-amino-acid polypeptide reads, in one-letter code: Siroheme biosynthesis protein MET8 (274 aa).

NAD(+) contacts are provided by residues 23–24 (EV), 43–45 (SPD), and phenylalanine 93. The active-site Proton acceptor is aspartate 141.

Belongs to the precorrin-2 dehydrogenase / sirohydrochlorin ferrochelatase family. MET8 subfamily. In terms of assembly, homodimer.

It carries out the reaction precorrin-2 + NAD(+) = sirohydrochlorin + NADH + 2 H(+). It catalyses the reaction siroheme + 2 H(+) = sirohydrochlorin + Fe(2+). The protein operates within porphyrin-containing compound metabolism; siroheme biosynthesis; siroheme from sirohydrochlorin: step 1/1. It functions in the pathway porphyrin-containing compound metabolism; siroheme biosynthesis; sirohydrochlorin from precorrin-2: step 1/1. In terms of biological role, catalyzes the conversion of precorrin-2 into siroheme. This reaction consist of the NAD-dependent oxidation of precorrin-2 into sirohydrochlorin and its subsequent ferrochelation into siroheme. The chain is Siroheme biosynthesis protein MET8 from Saccharomyces cerevisiae (strain ATCC 204508 / S288c) (Baker's yeast).